Consider the following 174-residue polypeptide: Inactive signal peptidase IA (174 aa).

Over 1–7 the chain is Cytoplasmic; that stretch reads MKKVVKY. A helical membrane pass occupies residues 8–28; sequence LISLILAIIIVLFVQTFVIVG. At 29 to 174 the chain is on the extracellular side; the sequence is HVIPNNDMSP…FSKWTIQFKS (146 aa).

Belongs to the peptidase S26 family.

It localises to the cell membrane. In terms of biological role, catalytically inactive. The polypeptide is Inactive signal peptidase IA (spsA) (Staphylococcus aureus (strain MRSA252)).